We begin with the raw amino-acid sequence, 55 residues long: Major pollen allergen Dac g 4 (55 aa).

This Dactylis glomerata (Orchard grass) protein is Major pollen allergen Dac g 4.